The following is a 165-amino-acid chain: UPF0303 protein Bcep1808_1522 (165 aa).

This sequence belongs to the UPF0303 family.

This chain is UPF0303 protein Bcep1808_1522, found in Burkholderia vietnamiensis (strain G4 / LMG 22486) (Burkholderia cepacia (strain R1808)).